Here is a 145-residue protein sequence, read N- to C-terminus: Leptin (145 aa).

Cys95 and Cys145 form a disulfide bridge.

It belongs to the leptin family.

It is found in the secreted. Key player in the regulation of energy balance and body weight control. Once released into the circulation, has central and peripheral effects by binding LEPR, found in many tissues, which results in the activation of several major signaling pathways. In Meleagris gallopavo (Wild turkey), this protein is Leptin (LEP).